We begin with the raw amino-acid sequence, 502 residues long: MTTSSDSAMVNHTPSPWYKFGFKSFAEFNTYVTFVFLGMSIMMVASAVTSAPDFLTRYYVYATGDPDAVAETPLFWNNANTFYNAGTYVLQVLTELFSLTPFMRRIPLSVRLFVGLGIPFAELLLIIIVPAATIKSQHGAIAVIMVVACVGGFSKALCDSCTNALVGPFPTKFMNGAQWGLTVIALLMSIIQIILKVSMGTSFHDILTMSRIYFGICIGIQLFAIFELAILRFNPFAQKYIAEYRAGAQRNAQNNESTLEETAPSMNEPAAGDIADLPATVDDKERALNEEEGDEVRAVTSEEFHVKRGAVLTATGDADKMVDLDQTGNITSTEQLLRASAASVFKRVYPMLVCVFLIYFTSLLTFPGVFFLVSTTSGWYMTVIVTLFNAGDFISRMVLMFRPLRPSPKVVVAGTLGRLIIIPFLVLCVRGIIRGEALPYVLITLLGLTNGYFGCMACIHCPRTTTLRYAGERSLAAMLSGISIMLGLCFGSNLSLAITLTH.

Topologically, residues 1-30 (MTTSSDSAMVNHTPSPWYKFGFKSFAEFNT) are cytoplasmic. A helical membrane pass occupies residues 31–51 (YVTFVFLGMSIMMVASAVTSA). Topologically, residues 52–81 (PDFLTRYYVYATGDPDAVAETPLFWNNANT) are extracellular. A helical membrane pass occupies residues 82 to 102 (FYNAGTYVLQVLTELFSLTPF). Over 103 to 111 (MRRIPLSVR) the chain is Cytoplasmic. Residues 112–132 (LFVGLGIPFAELLLIIIVPAA) form a helical membrane-spanning segment. Residues 133–137 (TIKSQ) lie on the Extracellular side of the membrane. A helical membrane pass occupies residues 138–158 (HGAIAVIMVVACVGGFSKALC). At 159-178 (DSCTNALVGPFPTKFMNGAQ) the chain is on the cytoplasmic side. A helical membrane pass occupies residues 179 to 199 (WGLTVIALLMSIIQIILKVSM). At 200-210 (GTSFHDILTMS) the chain is on the extracellular side. The chain crosses the membrane as a helical span at residues 211 to 231 (RIYFGICIGIQLFAIFELAIL). The Cytoplasmic segment spans residues 232–352 (RFNPFAQKYI…SVFKRVYPML (121 aa)). The disordered stretch occupies residues 252–273 (AQNNESTLEETAPSMNEPAAGD). A helical membrane pass occupies residues 353–373 (VCVFLIYFTSLLTFPGVFFLV). Residues 374 to 380 (STTSGWY) are Extracellular-facing. The chain crosses the membrane as a helical span at residues 381-401 (MTVIVTLFNAGDFISRMVLMF). Topologically, residues 402–408 (RPLRPSP) are cytoplasmic. The helical transmembrane segment at 409–429 (KVVVAGTLGRLIIIPFLVLCV) threads the bilayer. Topologically, residues 430–436 (RGIIRGE) are extracellular. A helical membrane pass occupies residues 437–457 (ALPYVLITLLGLTNGYFGCMA). At 458–477 (CIHCPRTTTLRYAGERSLAA) the chain is on the cytoplasmic side. A helical membrane pass occupies residues 478 to 498 (MLSGISIMLGLCFGSNLSLAI). The Extracellular portion of the chain corresponds to 499-502 (TLTH).

It belongs to the SLC29A/ENT transporter (TC 2.A.57) family.

The protein resides in the cell membrane. It catalyses the reaction inosine(in) = inosine(out). It carries out the reaction guanosine(in) = guanosine(out). Functionally, high affinity transporter for inosine and guanosine. The sequence is that of Nucleoside transporter 2 from Crithidia fasciculata.